Here is a 161-residue protein sequence, read N- to C-terminus: Protein-export protein SecB (161 aa).

It belongs to the SecB family. Homotetramer, a dimer of dimers. One homotetramer interacts with 1 SecA dimer.

Its subcellular location is the cytoplasm. In terms of biological role, one of the proteins required for the normal export of preproteins out of the cell cytoplasm. It is a molecular chaperone that binds to a subset of precursor proteins, maintaining them in a translocation-competent state. It also specifically binds to its receptor SecA. This Shewanella pealeana (strain ATCC 700345 / ANG-SQ1) protein is Protein-export protein SecB.